The primary structure comprises 179 residues: Bifunctional protein PyrR (179 aa).

Substrate is bound by residues Arg-39–Arg-40, Asp-101–Thr-109, Arg-134, and Val-158. A PRPP-binding motif is present at residues Val-97–Thr-109.

It belongs to the purine/pyrimidine phosphoribosyltransferase family. PyrR subfamily.

It catalyses the reaction UMP + diphosphate = 5-phospho-alpha-D-ribose 1-diphosphate + uracil. Its function is as follows. Regulates the transcription of the pyrimidine nucleotide (pyr) operon in response to exogenous pyrimidines. Functionally, also displays a weak uracil phosphoribosyltransferase activity which is not physiologically significant. The protein is Bifunctional protein PyrR of Haemophilus ducreyi (strain 35000HP / ATCC 700724).